A 124-amino-acid chain; its full sequence is CD59 glycoprotein (124 aa).

Positions 1–24 (MTSRGVHLLLRLLFLLAVFYSSDS) are cleaved as a signal peptide. Positions 25 to 101 (SLMCYHCLLP…DLCNGPEDDG (77 aa)) constitute a UPAR/Ly6 domain. 5 disulfide bridges follow: C28/C51, C31/C38, C44/C64, C70/C88, and C89/C94. Residue N37 is glycosylated (N-linked (GlcNAc...) asparagine). The GPI-anchor amidated glycine moiety is linked to residue G101. A propeptide spans 102–124 (TALTGRTVLLVAPLLAAARNLCL) (removed in mature form).

In terms of assembly, interacts with T-cell surface antigen CD2. Post-translationally, N- and O-glycosylated.

It is found in the cell membrane. Its subcellular location is the secreted. Functionally, potent inhibitor of the complement membrane attack complex (MAC) action, which protects self-cells from damage during complement activation. Acts by binding to the beta-haipins of C8 (C8A and C8B) components of the assembling MAC, forming an intermolecular beta-sheet that prevents incorporation of the multiple copies of C9 required for complete formation of the osmolytic pore. The protein is CD59 glycoprotein of Oryctolagus cuniculus (Rabbit).